Reading from the N-terminus, the 530-residue chain is MSKRILYKDQARKALERGIDVLAKAVSITLGPKGRNVVIDKKYGAPQIINDGIAIAKEIELKNHMENTGVSLIRQAAAKTNDVAGDGTTTATVLAHAIIKQGLKYVSTGSNPISLKKGIEKASQFIIQKISENSRPIEDVKSIIQVSSISAGNDEEIGSMIANAIQKVGKDGVISLEEGKSAITELEITQGMKFEKGYISPYFITNSEKMEVVLENPYILMTDKKITLVKEDLLPVLTLINKTNRPLLIIAEDVEKEALATLVINKLRGIVNVVAVRAPGFGDRKKALLEDIAILTNGQVISEETGLNLETITLDVLGQARRATILRDSTTIVEDKNQQAVHARCEQLKNQLLIAKSSYEKEKLQERLAKLIGGVAVIKVGAATETEMKEKKLRLEDSINATKAAIEEGIVPGGGTALVHISANLKQWAKINLSSDELLGANIVEQASLAPLHKIAENSGKNGSLIVEALEHKNFEIGYDALSNSLVDMYDAGIIDPAKVTRSAIQNAASIASMVLTTECVIVNRDKKNN.

ATP-binding positions include 29–32, 86–90, G414, 480–482, and D496; these read TLGP, DGTTT, and DAL.

Belongs to the chaperonin (HSP60) family. As to quaternary structure, forms a cylinder of 14 subunits composed of two heptameric rings stacked back-to-back. Interacts with the co-chaperonin GroES.

It localises to the plastid. It is found in the chloroplast. The enzyme catalyses ATP + H2O + a folded polypeptide = ADP + phosphate + an unfolded polypeptide.. Functionally, together with its co-chaperonin GroES, plays an essential role in assisting protein folding. The GroEL-GroES system forms a nano-cage that allows encapsulation of the non-native substrate proteins and provides a physical environment optimized to promote and accelerate protein folding. The chain is Chaperonin GroEL, chloroplastic from Cyanidium caldarium (Red alga).